The chain runs to 211 residues: Arginine exporter protein ArgO (211 aa).

6 helical membrane passes run 1–21 (MFTY…PLGP), 37–57 (LMIA…GIFG), 68–88 (LLAI…FGAL), 111–131 (IIIT…DTFV), 147–167 (WFAL…ALLA), and 182–202 (IINI…AKEG).

This sequence belongs to the LysE/ArgO transporter (TC 2.A.75) family.

It localises to the cell inner membrane. The catalysed reaction is L-arginine(in) = L-arginine(out). Its function is as follows. Involved in the export of arginine. Important to control the intracellular level of arginine and the correct balance between arginine and lysine. The sequence is that of Arginine exporter protein ArgO from Klebsiella pneumoniae (strain 342).